The sequence spans 313 residues: Formimidoylglutamase (313 aa).

Mn(2+)-binding residues include His130, Asp155, His157, Asp159, Asp241, and Asp243.

Belongs to the arginase family. The cofactor is Mn(2+).

The enzyme catalyses N-formimidoyl-L-glutamate + H2O = formamide + L-glutamate. Its pathway is amino-acid degradation; L-histidine degradation into L-glutamate; L-glutamate from N-formimidoyl-L-glutamate (hydrolase route): step 1/1. Functionally, catalyzes the conversion of N-formimidoyl-L-glutamate to L-glutamate and formamide. This chain is Formimidoylglutamase, found in Citrobacter koseri (strain ATCC BAA-895 / CDC 4225-83 / SGSC4696).